The sequence spans 348 residues: VIP36-like protein (348 aa).

The N-terminal stretch at 1–44 (MAATLGPLGSWQQWRRCLSARDGSRMLLLLLLLGSGQGPQQVGA) is a signal peptide. Residues 45-313 (GQTFEYLKRE…APLPPLSGLA (269 aa)) lie on the Lumenal side of the membrane. One can recognise an L-type lectin-like domain in the interval 49-274 (EYLKREHSLS…DVISLKLFEL (226 aa)). Residues Ser-93 and Asp-128 each contribute to the a carbohydrate site. Ca(2+) is bound by residues Asp-159, Tyr-161, and Asn-163. Residue 161–163 (YPN) coordinates a carbohydrate. An N-linked (GlcNAc...) (high mannose) asparagine glycan is attached at Asn-181. His-188 contacts a carbohydrate. Asp-191 is a binding site for Ca(2+). An intrachain disulfide couples Cys-200 to Cys-237. 258–260 (GDL) is a binding site for a carbohydrate. Residues 314-336 (LFLIVFFSLVFSVFAIVIGIILY) traverse the membrane as a helical segment. At 337–348 (NKWQEQSRKRFY) the chain is on the cytoplasmic side. Residues 344–346 (RKR) carry the Endoplasmic reticulum retention signal motif.

As to expression, expressed in numerous tissues. Highest expression in skeletal muscle and kidney, intermediate levels in heart, liver and placenta, low levels in brain, thymus, spleen, small intestine and lung.

The protein resides in the endoplasmic reticulum membrane. It is found in the golgi apparatus membrane. Its function is as follows. May be involved in the regulation of export from the endoplasmic reticulum of a subset of glycoproteins. May function as a regulator of ERGIC-53. The chain is VIP36-like protein (LMAN2L) from Homo sapiens (Human).